The primary structure comprises 335 residues: L-threo-3-deoxy-hexylosonate aldolase (335 aa).

50–51 (SN) provides a ligand contact to substrate. Lys175 functions as the Schiff-base intermediate with substrate in the catalytic mechanism.

This sequence belongs to the DapA family.

The enzyme catalyses 2-dehydro-3-deoxy-L-galactonate = L-glyceraldehyde + pyruvate. Its pathway is carbohydrate acid metabolism. Mediates the conversion of 2-dehydro-3-deoxy-L-galactonate to pyruvate and L-glyceraldehyde in D-galacturonate catabolic process. This Aspergillus niger protein is L-threo-3-deoxy-hexylosonate aldolase (gaaC).